A 340-amino-acid polypeptide reads, in one-letter code: Ketol-acid reductoisomerase (NADP(+)) (340 aa).

Positions 3-183 constitute a KARI N-terminal Rossmann domain; it reads INVYYDKDCD…GGGRTGIIET (181 aa). Residues 26–29, Ser-54, and 84–87 each bind NADP(+); these read FGSQ and DELQ. Residue His-109 is part of the active site. Gly-135 provides a ligand contact to NADP(+). A KARI C-terminal knotted domain is found at 184–329; that stretch reads TFKDETETDL…KKLRAMMPWI (146 aa). Mg(2+) is bound by residues Asp-192, Glu-196, Glu-228, and Glu-232. Substrate is bound at residue Ser-253.

The protein belongs to the ketol-acid reductoisomerase family. Requires Mg(2+) as cofactor.

It carries out the reaction (2R)-2,3-dihydroxy-3-methylbutanoate + NADP(+) = (2S)-2-acetolactate + NADPH + H(+). The catalysed reaction is (2R,3R)-2,3-dihydroxy-3-methylpentanoate + NADP(+) = (S)-2-ethyl-2-hydroxy-3-oxobutanoate + NADPH + H(+). It functions in the pathway amino-acid biosynthesis; L-isoleucine biosynthesis; L-isoleucine from 2-oxobutanoate: step 2/4. It participates in amino-acid biosynthesis; L-valine biosynthesis; L-valine from pyruvate: step 2/4. Its function is as follows. Involved in the biosynthesis of branched-chain amino acids (BCAA). Catalyzes an alkyl-migration followed by a ketol-acid reduction of (S)-2-acetolactate (S2AL) to yield (R)-2,3-dihydroxy-isovalerate. In the isomerase reaction, S2AL is rearranged via a Mg-dependent methyl migration to produce 3-hydroxy-3-methyl-2-ketobutyrate (HMKB). In the reductase reaction, this 2-ketoacid undergoes a metal-dependent reduction by NADPH to yield (R)-2,3-dihydroxy-isovalerate. The sequence is that of Ketol-acid reductoisomerase (NADP(+)) from Campylobacter concisus (strain 13826).